The sequence spans 137 residues: Bet1-like protein At4g14600 (137 aa).

The Cytoplasmic segment spans residues 1 to 113 (MASNPHRSGA…MSIIRSGNNH (113 aa)). Residues 43–105 (DPMHSDLDDE…KNNIRKLNMS (63 aa)) form the t-SNARE coiled-coil homology domain. Residues 114-134 (IMHVVLFALLVFFVLYIWSKM) traverse the membrane as a helical; Anchor for type IV membrane protein segment. The Vesicular portion of the chain corresponds to 135–137 (FKR).

This sequence belongs to the BET1 family.

It localises to the golgi apparatus membrane. The protein localises to the endoplasmic reticulum membrane. Its function is as follows. Required for vesicular transport from the ER to the Golgi complex. Functions as a SNARE associated with ER-derived vesicles. The chain is Bet1-like protein At4g14600 from Arabidopsis thaliana (Mouse-ear cress).